We begin with the raw amino-acid sequence, 125 residues long: Large ribosomal subunit protein bL20 (125 aa).

This sequence belongs to the bacterial ribosomal protein bL20 family.

Functionally, binds directly to 23S ribosomal RNA and is necessary for the in vitro assembly process of the 50S ribosomal subunit. It is not involved in the protein synthesizing functions of that subunit. This is Large ribosomal subunit protein bL20 from Thermobifida fusca (strain YX).